The following is a 244-amino-acid chain: MRDRISAFLEEKQGLSVNSKQSYKYDLEQFLDMVGERISETSLKIYQAQLANLKISAQKRKISACNQFLYFLYQKGEVDSFYRLELAKQAEKKTEKPEILYLDSFWQESDHPEGRLLALLILEMGLLPSEILAIKVADINLDFQVLRISKASQQRIVTIPTALLSELEPLMGQTYLFERGEKPYSRQWAFRQLESFVKEKGFPSLSAQVLREQFILRQIENKVDLYEIAKKLGLKTVLTLEKYR.

Residues 1–73 (MRDRISAFLE…ACNQFLYFLY (73 aa)) form the Core-binding (CB) domain. Residues 90–244 (AEKKTEKPEI…KTVLTLEKYR (155 aa)) enclose the Tyr recombinase domain. Residues lysine 150 and arginine 211 contribute to the active site. Tyrosine 243 (O-(3'-phospho-DNA)-tyrosine intermediate) is an active-site residue.

The protein belongs to the 'phage' integrase family. XerD-like subfamily.

It is found in the cytoplasm. Its function is as follows. Putative tyrosine recombinase. Not involved in the cutting and rejoining of the recombining DNA molecules on dif(SL) site. This Streptococcus pneumoniae serotype 2 (strain D39 / NCTC 7466) protein is Tyrosine recombinase XerD-like.